Here is a 155-residue protein sequence, read N- to C-terminus: Fibroblast growth factor 2 (155 aa).

The propeptide occupies 1–9 (MAAGSITTL). A compositionally biased stretch (polar residues) spans 1–11 (MAAGSITTLPT). Residues 1–24 (MAAGSITTLPTESEDGGNTPFSPG) are disordered. Heparin-binding positions include 27 to 31 (KDPKR) and 116 to 119 (RSRK).

Belongs to the heparin-binding growth factors family.

It localises to the secreted. The protein localises to the nucleus. In terms of biological role, acts as a ligand for FGFR1, FGFR2, FGFR3 and FGFR4. Also acts as an integrin ligand which is required for FGF2 signaling. Plays an important role in the regulation of cell survival, cell division, cell differentiation and cell migration. Functions as a potent mitogen in vitro. Can induce angiogenesis. In Xenopus laevis (African clawed frog), this protein is Fibroblast growth factor 2 (fgf2).